We begin with the raw amino-acid sequence, 338 residues long: Holliday junction branch migration complex subunit RuvB (338 aa).

A large ATPase domain (RuvB-L) region spans residues 4-187 (ADKDRLVSGD…FGISEHMAYY (184 aa)). ATP is bound by residues leucine 26, arginine 27, glycine 68, lysine 71, threonine 72, threonine 73, 134–136 (EDF), arginine 177, tyrosine 187, and arginine 224. Threonine 72 provides a ligand contact to Mg(2+). Residues 188 to 258 (SADDLSEIVK…MVDHALDQLQ (71 aa)) form a small ATPAse domain (RuvB-S) region. Residues 261-338 (QQGLDQIDRK…AHMGMSAEQH (78 aa)) are head domain (RuvB-H). Positions 316 and 321 each coordinate DNA.

It belongs to the RuvB family. Homohexamer. Forms an RuvA(8)-RuvB(12)-Holliday junction (HJ) complex. HJ DNA is sandwiched between 2 RuvA tetramers; dsDNA enters through RuvA and exits via RuvB. An RuvB hexamer assembles on each DNA strand where it exits the tetramer. Each RuvB hexamer is contacted by two RuvA subunits (via domain III) on 2 adjacent RuvB subunits; this complex drives branch migration. In the full resolvosome a probable DNA-RuvA(4)-RuvB(12)-RuvC(2) complex forms which resolves the HJ.

The protein localises to the cytoplasm. It catalyses the reaction ATP + H2O = ADP + phosphate + H(+). In terms of biological role, the RuvA-RuvB-RuvC complex processes Holliday junction (HJ) DNA during genetic recombination and DNA repair, while the RuvA-RuvB complex plays an important role in the rescue of blocked DNA replication forks via replication fork reversal (RFR). RuvA specifically binds to HJ cruciform DNA, conferring on it an open structure. The RuvB hexamer acts as an ATP-dependent pump, pulling dsDNA into and through the RuvAB complex. RuvB forms 2 homohexamers on either side of HJ DNA bound by 1 or 2 RuvA tetramers; 4 subunits per hexamer contact DNA at a time. Coordinated motions by a converter formed by DNA-disengaged RuvB subunits stimulates ATP hydrolysis and nucleotide exchange. Immobilization of the converter enables RuvB to convert the ATP-contained energy into a lever motion, pulling 2 nucleotides of DNA out of the RuvA tetramer per ATP hydrolyzed, thus driving DNA branch migration. The RuvB motors rotate together with the DNA substrate, which together with the progressing nucleotide cycle form the mechanistic basis for DNA recombination by continuous HJ branch migration. Branch migration allows RuvC to scan DNA until it finds its consensus sequence, where it cleaves and resolves cruciform DNA. The polypeptide is Holliday junction branch migration complex subunit RuvB (Lacticaseibacillus paracasei (strain ATCC 334 / BCRC 17002 / CCUG 31169 / CIP 107868 / KCTC 3260 / NRRL B-441) (Lactobacillus paracasei)).